Here is a 193-residue protein sequence, read N- to C-terminus: Probable GTP-binding protein EngB (193 aa).

Residues 24–193 enclose the EngB-type G domain; sequence NIPEIALAGR…ELKAALAELL (170 aa). GTP is bound by residues 32-39, 59-63, 77-80, 144-147, and 174-176; these read GRSNVGKS, GKTRT, DLPG, TKAD, and FSA. The Mg(2+) site is built by serine 39 and threonine 61.

It belongs to the TRAFAC class TrmE-Era-EngA-EngB-Septin-like GTPase superfamily. EngB GTPase family. The cofactor is Mg(2+).

Functionally, necessary for normal cell division and for the maintenance of normal septation. The protein is Probable GTP-binding protein EngB of Syntrophomonas wolfei subsp. wolfei (strain DSM 2245B / Goettingen).